We begin with the raw amino-acid sequence, 170 residues long: Heat shock protein beta-7 (170 aa).

Positions 1-39 are disordered; the sequence is MSHRTSSTFRAERSFHSSSSSSSSSTSSSASRALPAQDP. The tract at residues 1–71 is required for localization to SC35 splicing speckles; sequence MSHRTSSTFR…PLAFPARPGG (71 aa). Positions 16-31 are enriched in low complexity; the sequence is HSSSSSSSSSTSSSAS. Positions 62-170 constitute a sHSP domain; that stretch reads PLAFPARPGG…QQTFRTEIKI (109 aa).

It belongs to the small heat shock protein (HSP20) family. As to quaternary structure, interacts with C-terminal domain of actin-binding protein 280. In terms of tissue distribution, isoform 1 is highly expressed in adult and fetal heart, skeletal muscle, and at a much lower levels in adipose tissue and in aorta. Undetectable in other tissues. Isoform 2 and isoform 3 are poorly detected in heart.

The protein resides in the cytoplasm. It localises to the nucleus. It is found in the cajal body. The protein is Heat shock protein beta-7 (HSPB7) of Homo sapiens (Human).